A 1083-amino-acid polypeptide reads, in one-letter code: Alpha-mannosidase (1083 aa).

S2 carries the post-translational modification N-acetylserine. Positions 298, 300, 411, and 626 each coordinate Zn(2+). D411 acts as the Nucleophile in catalysis.

The protein belongs to the glycosyl hydrolase 38 family. Composed of isoforms with three constituent polypeptides described as [(107 kDa)-n (73 kDa)-(6-n) (31 kDa)-(6-n)], where n is 0-6. The 73 kDa and the 31 kDa polypeptides may be proteolytic derivatives of the 107 kDa polypeptide in the vacuole. Oligomerizes in the cytoplasm and retains its oligomeric form during import into the vacuole. Zn(2+) is required as a cofactor. In terms of processing, the N-terminus is blocked.

The protein resides in the vacuole. The catalysed reaction is Hydrolysis of terminal, non-reducing alpha-D-mannose residues in alpha-D-mannosides.. Its function is as follows. Degrades free oligosaccharides in the vacuole. This is Alpha-mannosidase (AMS1) from Saccharomyces cerevisiae (strain ATCC 204508 / S288c) (Baker's yeast).